Reading from the N-terminus, the 448-residue chain is Carbamoyl phosphate synthase arginine-specific small chain (448 aa).

A mitochondrion-targeting transit peptide spans 1-27 (MFKNIARLASMARSAPRTTASFQTRFM). A Glutamine amidotransferase type-1 domain is found at 224-415 (HIAVIDCGVK…LGQVHQYRAA (192 aa)). Residue cysteine 304 is the Nucleophile of the active site. Catalysis depends on residues histidine 388 and glutamate 390.

The protein belongs to the CarA family. As to quaternary structure, heterodimer composed of 2 chains; the small (or glutamine) chain promotes the hydrolysis of glutamine to ammonia, which is used by the large (or ammonia) chain to synthesize carbamoyl phosphate.

Its subcellular location is the mitochondrion matrix. It carries out the reaction hydrogencarbonate + L-glutamine + 2 ATP + H2O = carbamoyl phosphate + L-glutamate + 2 ADP + phosphate + 2 H(+). It catalyses the reaction L-glutamine + H2O = L-glutamate + NH4(+). The protein operates within amino-acid biosynthesis; L-arginine biosynthesis; carbamoyl phosphate from bicarbonate: step 1/1. In terms of biological role, small subunit of the arginine-specific carbamoyl phosphate synthase (CPSase). CPSase catalyzes the formation of carbamoyl phosphate from the ammonia moiety of glutamine, carbonate, and phosphate donated by ATP, the first step of the arginine biosynthetic pathway. The small subunit (glutamine amidotransferase) binds and cleaves glutamine to supply the large subunit with the substrate ammonia. The sequence is that of Carbamoyl phosphate synthase arginine-specific small chain (CPA1) from Yarrowia lipolytica (strain CLIB 122 / E 150) (Yeast).